We begin with the raw amino-acid sequence, 288 residues long: Shikimate kinase (288 aa).

81–91 (PVASGLKSSSA) is a binding site for ATP.

The protein belongs to the GHMP kinase family. Archaeal shikimate kinase subfamily.

The protein resides in the cytoplasm. The enzyme catalyses shikimate + ATP = 3-phosphoshikimate + ADP + H(+). Its pathway is metabolic intermediate biosynthesis; chorismate biosynthesis; chorismate from D-erythrose 4-phosphate and phosphoenolpyruvate: step 5/7. This Methanothrix thermoacetophila (strain DSM 6194 / JCM 14653 / NBRC 101360 / PT) (Methanosaeta thermophila) protein is Shikimate kinase.